We begin with the raw amino-acid sequence, 95 residues long: Small ribosomal subunit protein bS20c (95 aa).

Belongs to the bacterial ribosomal protein bS20 family.

Its subcellular location is the plastid. The protein localises to the cyanelle. Its function is as follows. Binds directly to 16S ribosomal RNA. The protein is Small ribosomal subunit protein bS20c (rps20) of Cyanophora paradoxa.